Reading from the N-terminus, the 2842-residue chain is MAAASYDQLLKQVEALKMENSNLRQELEDNSNHLTELETEASNMKEVLKQLQGSIEDETMTSGQIDLLERLKEFNLDSNFPGVKLRSKMSLRSYGSREGSVSSRSGECSPVPMGSFPRRAFVNGSRESTGYLEELEKERSLLLADLDKEEKEKDWYYAQLQNLTKRIDSLPLTENFSLQTDMTRRQLEYEARQIRAAMEEQLGTCQDMEKRAQRRIARIQQIEKDILRVRQLLQSQAAEAERSSQSKHETASHEAERQLEGQGVAESNLATSGSGQSSAARVDHETAGVLSSSGTHSAPRRLTSHLGTKVEMVYSLLSMLGTHDKDDMSRTLLAMSSSQDSCISMRQSGCLPLLIQLLHGNDKDSVLLGNSRGSKEARARASAALHNIIHSQPDDKRGRREIRVLHLLEQIRAYCETCWEWQEAHEQGMDQDKNPMPAPVEHQICPAVCVLMKLSFDEEHRHAMNELGGLQAIAELLQVDCEMHGLTDDHYSVTLRRYAGMALTNLTFGDVANKATLCSMKGCMRALVAQLKSESEDLQQVIASVLRNLSWRADVNSKKTLREVGSVKALMECALEVKKESTLKSVLSALWNLSAHCTENKADICAVDGALAFLVGTLTYRSQTNTLAIIESGGGILRNVSSLIATNEDHRQILRENNCLQTLLQHLKSHSLTIVSNACGTLWNLSARNPKDQEALWDMGAVSMLKNLIHSKHKMIAMGSAAALRNLMANRPAKYKDANIMSPGSSLPSLHVRKQKALEAELDAQHLSETFDNIDNLSPKASHRSKQRHKQNLYGDYVFDASRHDDNRSDNFNTGNMTVLSPYLNTTVLPSSSSSRGSLDSSRSEKDRSLERERGIGLSTYHSATENPGTSSKRGLQLSATAAQIAKVMEEVSALHTSQDDRSPASAAELHCVAEERTAARRSSASHTHPNTHNFAKSESSNRTCSMPYAKVEYKRSSNDSLNSVTSSDGYGKRGQMKPSVESYSEDDEGKFCSYGQYPADLAHKIHSANHMDDNGGELDTPINYSLKYSDEQLNSGRQSPSQNERWARPKHVIEDEIKQNEQRQSRSQNTNFPVYSENTDDKHLKFQQHFGQQECVSPYRSRGTNGSETNRMGSSHAVNQNVNQSLCQEDDYEDDKPTNYSERYSEEEQHEEEERPTNYSIKYNEEKHHVDQPIDYSLKYATDISSSQKPSFSFSKTPSVQGTKTEHNSPSSEAASAPSSNAKRQSQLHPSSAQRNGQTPKGTACKVPSINQETMQTYCVEDTPICFSRCSSLSSLSSAEDEIGCDQTTQEADSANTLQIAEIKENDVTRSAQDPASDVPAVSQSTRTKPSRLQASGLASESARHKAVEFSSGAKSPSKSGAQTPKSPPEHYVQETPLVFSRCTSVSSLDSFESRSIASSVQSEPCSGMVSGIVSPSDLPDSPGQTMPPSRSKTPPPPPPPQPVQTKREVPKTKVPAAEQREGGPKQTAVSAAVQRVQVLPDADTLLHFATESTPDGFSCSSSLSALSLDEPFIQKDVELRIMPPVQENDNGNETEPEQPEESNENQDKEVEKPDSEKDLLDDSDDDDIEILEECIISAMPTKSSRKAKKLAQTASKLPPPVARKPSQLPVYKLLPSQSRLQAQKHVSFTPGDDVPRVYCVEGTPINFSTATSLSDLTIESPPNELAAGDGVRASVQSGEFEKRDTIPTEGRSTDEAQRGKVSSIAIPDLDGSKAEEGDILAECINSALPKGRSHKPFRVKKIMDQVQQASMTSSGTNKNQIDTKKKKPTSPVKPMPQNTEYRTRVRKNTDSKVNVNTEETFSDNKDSKKQSLKNNPKDLNDKLPDNEDRVRGGFTFDSPHHYAPIEGTPYCFSRNDSLSSLDFDDDDVDLSREKAELRKGKESKDSEAKVTCHTEPSSSQQSARKAQASTKHPVNRGPSKPLLQEQPTFPQSSKDVPDRGAATDEKLQNFAIENTPVCFSRNSSLSSLSDVDQENNNNEETGPVRDAEPANAQGQPGKPQASGYAPKSFHVEDTPVCFSRNSSLSSLSIDSEDDLLRECISSAMPKKRRPSRLKGEGEWQSPRKVGSVLAEDLTLDLKDIQRPESEHGLSPDSENFDWKAIQEGANSIVSSLHQAAAAAACLSRQASSDSDSILSLKSGVSLGSPFHLTPDQEEKPFTSHKGPRILKPGEKSTLEAKKIESENKGIKGGKKVYKSLITGKIRSNSEISSQMKQPLQTNMPSISRGRTMIHIPGVRNSSSSTSPVSKKGPPLKTPASKSPSEGPVATTSPRGTKPAVKSELSPITRQTSHISGSNKGPSRSGSRDSTPSRPTQQPLSRPMQSPGRNSISPGRNGISTPNKLSQLPRTSSPSTASTKSSGSGKMSYTSPGRQLSQQNLSKQTGLSKNASSIPRSESASKGLNQMNNSNGSNKKVELSRMSSTKSSGSESDRSERPALVRQSTFIKEAPSPTLRRKLEESASFESLSPSSRPDSPTRSQAQTPVLSPSLPDMSLSTHPSVQAGGWRKLPPNLSPTIEYSDGRPSKRHDIARSHSESPSRLPVNRAGTWKREHSKHSSSLPRVSTWRRTGSSSSILSASSESSEKAKSEDEKHVNSVPGPRQMKENQVPTKGTWRKIKESEISPTNTVSQTTSSGAASGAESKTLIYQMAPAVSRTEDVWVRIEDCPINNPRSGRSPTGNTPPVIDSISEKGNPSIKDSKDTQGKQSVGSGSPVQTVGLENRLNSFIQVEAPEQKGTETKAGQGSPAPVAETGETCMAERTPFSSSSSSKHSSPSGTVAARVTPFNYNPSPRKSSADSTSARPSQIPTPVGSSTKKRDSKTDSTESSGAQSPKRHSGSYLVTSV.

A2 carries the post-translational modification N-acetylalanine. Positions 2-62 form a coiled coil; that stretch reads AAASYDQLLK…GSIEDETMTS (61 aa). 2 positions are modified to phosphoserine: S105 and S109. Residues 125–260 adopt a coiled-coil conformation; it reads SRESTGYLEE…ASHEAERQLE (136 aa). The tract at residues 238-304 is disordered; it reads AEAERSSQSK…THSAPRRLTS (67 aa). Residues 239-259 show a composition bias toward basic and acidic residues; that stretch reads EAERSSQSKHETASHEAERQL. Residues 268–279 are compositionally biased toward polar residues; the sequence is NLATSGSGQSSA. ARM repeat units follow at residues 451-493, 503-545, 546-589, 590-636, 637-681, 682-723, and 724-765; these read LMKL…HYSV, LTNL…IASV, LRNL…VLSA, LWNL…GGGI, LRNV…ACGT, LWNL…SAAA, and LRNL…LDAQ. 3 positions are modified to phosphoserine: S742, S746, and S778. The tract at residues 828 to 877 is disordered; it reads VLPSSSSSRGSLDSSRSEKDRSLERERGIGLSTYHSATENPGTSSKRGLQ. Residues 831-841 are compositionally biased toward low complexity; sequence SSSSSRGSLDS. Residues 842 to 855 show a composition bias toward basic and acidic residues; sequence SRSEKDRSLERERG. Residues 860 to 877 are compositionally biased toward polar residues; it reads TYHSATENPGTSSKRGLQ. S906 carries the post-translational modification Phosphoserine. Disordered stretches follow at residues 921 to 942 and 956 to 988; these read RRSS…ESSN and RSSN…SEDD. The segment covering 931–942 has biased composition (polar residues); that stretch reads NTHNFAKSESSN. Low complexity predominate over residues 959-969; sequence NDSLNSVTSSD. Residues S985, S1036, and S1040 each carry the phosphoserine modification. The tract at residues 1018–1167 is interaction with catenins; that stretch reads ELDTPINYSL…TNYSIKYNEE (150 aa). Disordered regions lie at residues 1058–1078, 1092–1166, 1188–1249, and 1306–1373; these read IKQN…VYSE, GQQE…KYNE, SQKP…CKVP, and ENDV…PEHY. Polar residues-rich tracts occupy residues 1066–1078 and 1103–1128; these read SRSQ…VYSE and RGTN…QSLC. The segment covering 1144–1157 has biased composition (basic and acidic residues); that stretch reads RYSEEEQHEEEERP. Composition is skewed to low complexity over residues 1188–1200 and 1209–1223; these read SQKP…KTPS and NSPS…SSNA. Composition is skewed to polar residues over residues 1224–1242 and 1323–1340; these read KRQS…QTPK and VSQS…SGLA. Positions 1352–1363 are enriched in low complexity; it reads SSGAKSPSKSGA. 5 positions are modified to phosphoserine: S1357, S1368, S1382, S1389, and S1392. Disordered stretches follow at residues 1398-1474, 1525-1568, 1584-1609, and 1661-1711; these read IASS…VSAA, PPVQ…SDDD, KSSR…KPSQ, and ESPP…IPDL. The residue at position 1435 (T1435) is a Phosphothreonine. The span at 1435–1444 shows a compositional bias: pro residues; the sequence is TPPPPPPPQP. Positions 1532 to 1546 are enriched in acidic residues; the sequence is NGNETEPEQPEESNE. The segment covering 1547–1562 has biased composition (basic and acidic residues); sequence NQDKEVEKPDSEKDLL. S1565 bears the Phosphoserine mark. Basic and acidic residues predominate over residues 1681–1700; sequence EFEKRDTIPTEGRSTDEAQR. Residue S1714 is modified to Phosphoserine. The span at 1748–1762 shows a compositional bias: polar residues; sequence VQQASMTSSGTNKNQ. Disordered stretches follow at residues 1748–1950, 1963–2010, and 2043–2067; these read VQQA…EKLQ, RNSS…APKS, and SSAM…PRKV. A Phosphoserine modification is found at S1772. Composition is skewed to basic and acidic residues over residues 1783 to 1792 and 1804 to 1833; these read YRTRVRKNTD and SDNK…DRVR. Residues S1859, S1861, and S1862 each carry the phosphoserine modification. The segment at 1864–1891 is highly charged; it reads DFDDDDVDLSREKAELRKGKESKDSEAK. Positions 1871 to 1894 are enriched in basic and acidic residues; it reads DLSREKAELRKGKESKDSEAKVTC. The segment covering 1899 to 1911 has biased composition (low complexity); that stretch reads SSSQQSARKAQAS. The segment covering 1927–1936 has biased composition (polar residues); the sequence is EQPTFPQSSK. Residues 1937–1949 show a composition bias toward basic and acidic residues; it reads DVPDRGAATDEKL. A phosphoserine mark is found at S1969 and S1971. Positions 2034 to 2058 are interaction with AXIN1; the sequence is EDDLLRECISSAMPKKRRPSRLKGE. Residues S2087, S2092, S2125, S2129, S2130, and S2132 each carry the phosphoserine modification. 3 disordered regions span residues 2148–2173, 2234–2641, and 2664–2842; these read FHLT…PGEK, PGVR…AESK, and CPIN…VTSV. Residue T2151 is modified to Phosphothreonine. Residues 2167 to 2674 form a basic region region; that stretch reads ILKPGEKSTL…PINNPRSGRS (508 aa). Composition is skewed to polar residues over residues 2257–2272 and 2283–2347; these read ASKS…TSPR and SPIT…QLPR. Residues S2260, S2270, and S2283 each carry the phosphoserine modification. The span at 2348-2369 shows a compositional bias: low complexity; that stretch reads TSSPSTASTKSSGSGKMSYTSP. Polar residues-rich tracts occupy residues 2370-2411 and 2418-2427; these read GRQL…NGSN and RMSSTKSSGS. A compositionally biased stretch (low complexity) spans 2459-2477; the sequence is SASFESLSPSSRPDSPTRS. 2 positions are modified to phosphoserine: S2473 and S2535. The interaction with DLG1 stretch occupies residues 2475–2842; the sequence is TRSQAQTPVL…HSGSYLVTSV (368 aa). Over residues 2518 to 2535 the composition is skewed to basic and acidic residues; the sequence is SDGRPSKRHDIARSHSES. Positions 2555–2568 are enriched in polar residues; that stretch reads SSSLPRVSTWRRTG. The residue at position 2569 (S2569) is a Phosphoserine. The segment covering 2569–2579 has biased composition (low complexity); it reads SSSSILSASSE. The segment covering 2580–2592 has biased composition (basic and acidic residues); it reads SSEKAKSEDEKHV. Over residues 2629–2638 the composition is skewed to low complexity; sequence TTSSGAASGA. 2 stretches are compositionally biased toward polar residues: residues 2668–2679 and 2702–2713; these read NPRSGRSPTGNT and GKQSVGSGSPVQ. Residues S2671 and S2674 each carry the phosphoserine modification. An interaction with MAPRE1 region spans residues 2674–2842; the sequence is SPTGNTPPVI…HSGSYLVTSV (169 aa). T2679 carries the phosphothreonine modification. 2 positions are modified to phosphoserine: S2710 and S2723. Residues 2762 to 2773 show a composition bias toward low complexity; the sequence is SSSSSSKHSSPS. Positions 2783–2809 are enriched in polar residues; it reads FNYNPSPRKSSADSTSARPSQIPTPVG. At S2788 the chain carries Phosphoserine. The Microtubule tip localization signal signature appears at 2802–2805; that stretch reads SQIP. The PDZ-binding motif lies at 2840–2842; it reads TSV.

This sequence belongs to the adenomatous polyposis coli (APC) family. In terms of assembly, forms homooligomers. Found in a complex consisting of ARHGEF4, APC and CTNNB1. Found in a complex composed of MACF1, APC, AXIN1, CTNNB1 and GSK3B. The complex composed, at least, of APC, CTNNB1 and GSK3B interacts with JPT1; the interaction requires the inactive form of GSK3B (phosphorylated at 'Ser-9'). Interacts with APC2. Interacts with DLG1 (via PDZ domains) and DLG3 (via PDZ domains). Interacts with alpha- and beta-catenins. Interacts with AXIN1 (via RGS domain). Interacts with ARHGEF4 (via N-terminus). Interacts (via C-terminal residues 2674-2843) with MAPRE1 (via C-terminal residues 206-211); the interaction inhibits association with and bundling of F-actin. Interacts with MAPRE2 and MAPRE3 (via C-terminus). Interacts with DIAPH1; DIAPH1 acts as a scaffold protein for MAPRE1 and APC to stabilize microtubules and promote cell migration. Interacts with DIAPH2. Interacts with SCRIB; may mediate APC targeting to adherens junctions of epithelial cells. Interacts with SPATA13 (via N-terminus and SH3 domain). Interacts with ASAP1 (via SH3 domain). Interacts (at the cell membrane) with AMER1 and AMER2 (via ARM repeats). Interacts with KHDRBS1. Interacts with actin; binds both to F-actin and actin filament bundles. In terms of processing, phosphorylated; phosphorylation enhances the F-actin bundling activity. Phosphorylated by GSK3B. Post-translationally, ubiquitinated, leading to its degradation by the proteasome. Ubiquitination is facilitated by Axin. Deubiquitinated by ZRANB1/TRABID.

The protein resides in the cell junction. It localises to the adherens junction. It is found in the cytoplasm. The protein localises to the cytoskeleton. Its subcellular location is the cell projection. The protein resides in the lamellipodium. It localises to the ruffle membrane. It is found in the cell membrane. Its function is as follows. Tumor suppressor. Promotes rapid degradation of CTNNB1 and participates in Wnt signaling as a negative regulator. APC activity is correlated with its phosphorylation state. Activates the GEF activity of SPATA13 and ARHGEF4. Plays a role in hepatocyte growth factor (HGF)-induced cell migration. Required for MMP9 up-regulation via the JNK signaling pathway in colorectal tumor cells. Associates with both microtubules and actin filaments, components of the cytoskeleton. Plays a role in mediating the organization of F-actin into ordered bundles. Functions downstream of Rho GTPases and DIAPH1 to selectively stabilize microtubules. Acts as a mediator of ERBB2-dependent stabilization of microtubules at the cell cortex. It is required for the localization of MACF1 to the cell membrane and this localization of MACF1 is critical for its function in microtubule stabilization. The chain is Adenomatous polyposis coli protein (Apc) from Rattus norvegicus (Rat).